Here is a 568-residue protein sequence, read N- to C-terminus: Probable inactive 1-aminocyclopropane-1-carboxylate synthase-like protein 2 (568 aa).

The tract at residues 1-21 (MSHRSDTLPVPSGQRRGRVPR) is disordered. The residue at position 395 (Lys-395) is an N6-(pyridoxal phosphate)lysine.

Belongs to the class-I pyridoxal-phosphate-dependent aminotransferase family.

The polypeptide is Probable inactive 1-aminocyclopropane-1-carboxylate synthase-like protein 2 (ACCSL) (Homo sapiens (Human)).